The following is a 343-amino-acid chain: 3-oxopimeloyl-[acyl-carrier-protein] synthase (343 aa).

Active-site residues include Cys132 and His272. Positions 273–277 are ACP-binding; it reads QANHR. Asn302 is a catalytic residue.

This sequence belongs to the thiolase-like superfamily. BioZ family.

It carries out the reaction malonyl-[ACP] + an acyl-CoA + H(+) = a 3-oxoacyl-[ACP] + CO2 + CoA. The catalysed reaction is glutaryl-CoA + malonyl-[ACP] + H(+) = 3-oxo-6-carboxyhexanoyl-[ACP] + CO2 + CoA. The protein operates within cofactor biosynthesis; biotin biosynthesis. Involved in the formation of the biotin precursor pimeloyl-ACP. Catalyzes the condensation of glutaryl-CoA, an intermediate in lysine degradation, with malonyl-ACP to produce 3-oxopimeloyl-ACP. This chain is 3-oxopimeloyl-[acyl-carrier-protein] synthase, found in Rhodothermus marinus (strain ATCC 43812 / DSM 4252 / R-10) (Rhodothermus obamensis).